The primary structure comprises 244 residues: ATP synthase subunit b 2 (244 aa).

A helical membrane pass occupies residues 2 to 22; sequence TVDWWTIGLQVINVSVLIWLL.

This sequence belongs to the ATPase B chain family. F-type ATPases have 2 components, F(1) - the catalytic core - and F(0) - the membrane proton channel. F(1) has five subunits: alpha(3), beta(3), gamma(1), delta(1), epsilon(1). F(0) has three main subunits: a(1), b(2) and c(10-14). The alpha and beta chains form an alternating ring which encloses part of the gamma chain. F(1) is attached to F(0) by a central stalk formed by the gamma and epsilon chains, while a peripheral stalk is formed by the delta and b chains.

Its subcellular location is the cell inner membrane. Functionally, f(1)F(0) ATP synthase produces ATP from ADP in the presence of a proton or sodium gradient. F-type ATPases consist of two structural domains, F(1) containing the extramembraneous catalytic core and F(0) containing the membrane proton channel, linked together by a central stalk and a peripheral stalk. During catalysis, ATP synthesis in the catalytic domain of F(1) is coupled via a rotary mechanism of the central stalk subunits to proton translocation. Its function is as follows. Component of the F(0) channel, it forms part of the peripheral stalk, linking F(1) to F(0). This is ATP synthase subunit b 2 from Gluconobacter oxydans (strain 621H) (Gluconobacter suboxydans).